A 303-amino-acid chain; its full sequence is Phosphatidylglycerol--prolipoprotein diacylglyceryl transferase (303 aa).

The next 4 helical transmembrane spans lie at 18–38, 58–78, 106–126, and 133–153; these read LGPF…LVGL, LLPI…VAFE, IWGG…SIIF, and EHFW…QAIG. Arginine 154 contacts a 1,2-diacyl-sn-glycero-3-phospho-(1'-sn-glycerol). 3 helical membrane-spanning segments follow: residues 193 to 213, 223 to 243, and 266 to 286; these read PTFL…IFLF, LPPG…RFWI, and IAQL…WRIY.

The protein belongs to the Lgt family.

The protein localises to the cell inner membrane. The catalysed reaction is L-cysteinyl-[prolipoprotein] + a 1,2-diacyl-sn-glycero-3-phospho-(1'-sn-glycerol) = an S-1,2-diacyl-sn-glyceryl-L-cysteinyl-[prolipoprotein] + sn-glycerol 1-phosphate + H(+). It participates in protein modification; lipoprotein biosynthesis (diacylglyceryl transfer). Catalyzes the transfer of the diacylglyceryl group from phosphatidylglycerol to the sulfhydryl group of the N-terminal cysteine of a prolipoprotein, the first step in the formation of mature lipoproteins. This Prochlorococcus marinus (strain NATL2A) protein is Phosphatidylglycerol--prolipoprotein diacylglyceryl transferase.